The chain runs to 115 residues: Large ribosomal subunit protein eL30 (115 aa).

A phosphoserine mark is found at Ser10 and Ser16. Lys26 is subject to N6-acetyllysine; alternate. Lys26 is covalently cross-linked (Glycyl lysine isopeptide (Lys-Gly) (interchain with G-Cter in SUMO2); alternate).

Belongs to the eukaryotic ribosomal protein eL30 family. Component of the large ribosomal subunit.

It localises to the cytoplasm. Functionally, component of the large ribosomal subunit. The ribosome is a large ribonucleoprotein complex responsible for the synthesis of proteins in the cell. The chain is Large ribosomal subunit protein eL30 (RPL30) from Homo sapiens (Human).